Here is a 368-residue protein sequence, read N- to C-terminus: 3-dehydroquinate synthase (368 aa).

NAD(+) is bound by residues 69-74 (DGEAYK), 103-107 (GVIGD), 127-128 (TT), Lys140, and Lys149. Positions 182, 245, and 262 each coordinate Zn(2+).

This sequence belongs to the sugar phosphate cyclases superfamily. Dehydroquinate synthase family. It depends on NAD(+) as a cofactor. Requires Co(2+) as cofactor. Zn(2+) serves as cofactor.

The protein resides in the cytoplasm. The enzyme catalyses 7-phospho-2-dehydro-3-deoxy-D-arabino-heptonate = 3-dehydroquinate + phosphate. Its pathway is metabolic intermediate biosynthesis; chorismate biosynthesis; chorismate from D-erythrose 4-phosphate and phosphoenolpyruvate: step 2/7. In terms of biological role, catalyzes the conversion of 3-deoxy-D-arabino-heptulosonate 7-phosphate (DAHP) to dehydroquinate (DHQ). The polypeptide is 3-dehydroquinate synthase (Pseudomonas aeruginosa (strain ATCC 15692 / DSM 22644 / CIP 104116 / JCM 14847 / LMG 12228 / 1C / PRS 101 / PAO1)).